The sequence spans 339 residues: ATPase GET3 (339 aa).

34–41 (KGGVGKTT) provides a ligand contact to ATP. The active site involves Asp-63. Residues Glu-243 and Asn-270 each coordinate ATP. Positions 281 and 284 each coordinate Zn(2+).

It belongs to the arsA ATPase family. Homodimer.

The protein resides in the cytoplasm. The protein localises to the endoplasmic reticulum. ATPase required for the post-translational delivery of tail-anchored (TA) proteins to the endoplasmic reticulum. Recognizes and selectively binds the transmembrane domain of TA proteins in the cytosol. This complex then targets to the endoplasmic reticulum by membrane-bound receptors, where the tail-anchored protein is released for insertion. This process is regulated by ATP binding and hydrolysis. ATP binding drives the homodimer towards the closed dimer state, facilitating recognition of newly synthesized TA membrane proteins. ATP hydrolysis is required for insertion. Subsequently, the homodimer reverts towards the open dimer state, lowering its affinity for the membrane-bound receptor, and returning it to the cytosol to initiate a new round of targeting. The chain is ATPase GET3 from Coccidioides immitis (strain RS) (Valley fever fungus).